The primary structure comprises 342 residues: Isopentenyl-diphosphate delta-isomerase (342 aa).

12-13 (RK) serves as a coordination point for substrate. Residues 71 to 73 (AMT), S101, and N129 contribute to the FMN site. 101–103 (SQR) is a binding site for substrate. Position 163 (Q163) interacts with substrate. Position 164 (E164) interacts with Mg(2+). FMN is bound by residues K195, T225, 272 to 274 (GIR), and 293 to 294 (AR).

This sequence belongs to the IPP isomerase type 2 family. In terms of assembly, homooctamer. Dimer of tetramers. FMN serves as cofactor. The cofactor is NADPH. Requires Mg(2+) as cofactor.

It localises to the cytoplasm. It carries out the reaction isopentenyl diphosphate = dimethylallyl diphosphate. Functionally, involved in the biosynthesis of isoprenoids. Catalyzes the 1,3-allylic rearrangement of the homoallylic substrate isopentenyl (IPP) to its allylic isomer, dimethylallyl diphosphate (DMAPP). The protein is Isopentenyl-diphosphate delta-isomerase of Mycolicibacterium vanbaalenii (strain DSM 7251 / JCM 13017 / BCRC 16820 / KCTC 9966 / NRRL B-24157 / PYR-1) (Mycobacterium vanbaalenii).